The primary structure comprises 575 residues: Transport inhibitor response 1-like protein Os04g0395600 (575 aa).

The 45-residue stretch at 1–45 folds into the F-box domain; that stretch reads MTYFPEEVVEHIFSFLPAQRDRNTVSLVCKVWYEIERLSRRGVFV. A 1D-myo-inositol hexakisphosphate-binding site is contributed by Lys69. The interaction with auxin-responsive proteins stretch occupies residues 76 to 77; the sequence is DF. 1D-myo-inositol hexakisphosphate contacts are provided by residues 108–109 and Arg340; that span reads KR. The interaction with auxin-responsive proteins stretch occupies residues 343–348; sequence PSDFYV. 1D-myo-inositol hexakisphosphate is bound at residue 396–398; it reads RFR. The interval 400-404 is interaction with auxin-responsive proteins; that stretch reads CILEP. Arg431 contacts 1D-myo-inositol hexakisphosphate. Residues 459–460 are interaction with auxin-responsive proteins; that stretch reads AF. 1D-myo-inositol hexakisphosphate-binding positions include 479–480 and Arg504; that span reads RK.

Part of a SCF (SKP1-cullin-F-box) protein ligase complex. May interact with auxin and auxin-responsive proteins.

It localises to the nucleus. Its pathway is protein modification; protein ubiquitination. The chain is Transport inhibitor response 1-like protein Os04g0395600 from Oryza sativa subsp. japonica (Rice).